A 396-amino-acid chain; its full sequence is Polygalacturonase (396 aa).

The signal sequence occupies residues 1–22; it reads MDLKFKVHFALVLLFLAHFGES. N-linked (GlcNAc...) asparagine glycans are attached at residues Asn-143, Asn-151, Asn-174, Asn-181, Asn-203, and Asn-208. 2 PbH1 repeats span residues 172-198 and 199-220; these read CKNLTFIRFNVSAPANSPNTDGIHVSR and SSSVNITDSNFSTGDDCISVGD. Asp-213 (proton donor) is an active-site residue. Cys-215 and Cys-232 are joined by a disulfide. Residue His-236 is part of the active site. PbH1 repeat units lie at residues 252-273, 282-303, and 316-356; these read VVGVFVRNCTFTNTDNGVRIKT, VNDVHFEDIIVQNVSNPVVIDQ, and PSQV…EVGD. Residues Asn-259 and Asn-294 are each glycosylated (N-linked (GlcNAc...) asparagine). The disordered stretch occupies residues 364 to 396; the sequence is KEGPAKSSCENIKPSLKGKQNPPVCTASAASSS. Cys-372 and Cys-388 form a disulfide bridge.

This sequence belongs to the glycosyl hydrolase 28 family. As to expression, pollen.

The protein localises to the secreted. It localises to the cell wall. It catalyses the reaction (1,4-alpha-D-galacturonosyl)n+m + H2O = (1,4-alpha-D-galacturonosyl)n + (1,4-alpha-D-galacturonosyl)m.. Its function is as follows. May function in depolymerizing pectin during pollen development, germination, and tube growth. The chain is Polygalacturonase (PG1) from Nicotiana tabacum (Common tobacco).